Consider the following 632-residue polypeptide: Protein EAP1 (632 aa).

Disordered regions lie at residues 1-80 (MELN…KKNK), 149-204 (MGPP…DDEE), and 248-313 (KSKG…PSLS). Polar residues-rich tracts occupy residues 7-38 (SIIS…SNLF) and 54-69 (VESS…ATSG). S30 bears the Phosphoserine mark. Phosphoserine is present on residues S281 and S282. The span at 288-298 (NLKRQDKKEES) shows a compositional bias: basic and acidic residues. Residues S327 and S344 each carry the phosphoserine modification. A disordered region spans residues 347 to 378 (SLPSLDNNNQVPSSNVSVVNNDGNSTPHQSGS). Residues 353–371 (NNNQVPSSNVSVVNNDGNS) show a composition bias toward low complexity. S387 is modified (phosphoserine). Disordered regions lie at residues 429–541 (QHPP…PPPP) and 587–632 (QGNF…KNIK). Residue 440-447 (GLLNKGKS) participates in ATP binding. Residues 474–486 (PNFPQRMMPPPPG) are compositionally biased toward pro residues. Residues 492–505 (KDSKDVNKKEDRQL) are compositionally biased toward basic and acidic residues. Composition is skewed to polar residues over residues 507–516 (QNKNPNGTRN), 590–603 (FPPN…SNSP), and 610–621 (INANGKNVTNQL).

As to quaternary structure, interacts with SMY2, SYH1 and eIF4E.

The protein resides in the cytoplasm. In terms of biological role, can regulate translation through binding to eIF4E. Competes with eIF4G and p20 for binding to eIF4E in vivo and inhibits cap-dependent translation in vitro. Plays a role in cell growth and is implicated in the TOR signaling cascade. Functions independently of eIF4E to maintain genetic stability and to attenuate GCN4 translation upon TOR inactivation. The polypeptide is Protein EAP1 (EAP1) (Saccharomyces cerevisiae (strain ATCC 204508 / S288c) (Baker's yeast)).